Consider the following 333-residue polypeptide: Photosystem II assembly lipoprotein Ycf48 (333 aa).

Positions 1 to 23 (MKRLLNSATQLLLVLVLGISLSG) are cleaved as a signal peptide. Cys24 is lipidated: N-palmitoyl cysteine. A lipid anchor (S-diacylglycerol cysteine) is attached at Cys24.

This sequence belongs to the Ycf48 family. In terms of assembly, part of early PSII assembly complexes which includes D1 (psbA) and PsbI; not found in mature PSII. Binds to the lumenal side of PSII complexes. Interacts with YidC.

It localises to the cellular thylakoid membrane. Its function is as follows. A factor required for optimal assembly of photosystem II (PSII), acting in the early stages of PSII assembly. Also plays a role in replacement of photodamaged D1 (psbA). Assists YidC in synthesis of chlorophyll-binding proteins. This chain is Photosystem II assembly lipoprotein Ycf48, found in Synechococcus sp. (strain CC9605).